Here is a 358-residue protein sequence, read N- to C-terminus: DNA polymerase IV (358 aa).

One can recognise a UmuC domain in the interval I4–G185. Mg(2+) contacts are provided by D8 and D103. Residue E104 is part of the active site.

The protein belongs to the DNA polymerase type-Y family. Monomer. Mg(2+) is required as a cofactor.

It is found in the cytoplasm. The enzyme catalyses DNA(n) + a 2'-deoxyribonucleoside 5'-triphosphate = DNA(n+1) + diphosphate. Poorly processive, error-prone DNA polymerase involved in untargeted mutagenesis. Copies undamaged DNA at stalled replication forks, which arise in vivo from mismatched or misaligned primer ends. These misaligned primers can be extended by PolIV. Exhibits no 3'-5' exonuclease (proofreading) activity. May be involved in translesional synthesis, in conjunction with the beta clamp from PolIII. In Shewanella baltica (strain OS195), this protein is DNA polymerase IV.